Consider the following 513-residue polypeptide: Histidine ammonia-lyase (513 aa).

The segment at residues 144–146 is a cross-link (5-imidazolinone (Ala-Gly)); sequence ASG. Serine 145 carries the 2,3-didehydroalanine (Ser) modification.

The protein belongs to the PAL/histidase family. In terms of processing, contains an active site 4-methylidene-imidazol-5-one (MIO), which is formed autocatalytically by cyclization and dehydration of residues Ala-Ser-Gly.

It is found in the cytoplasm. The catalysed reaction is L-histidine = trans-urocanate + NH4(+). It participates in amino-acid degradation; L-histidine degradation into L-glutamate; N-formimidoyl-L-glutamate from L-histidine: step 1/3. The protein is Histidine ammonia-lyase of Streptococcus pyogenes serotype M6 (strain ATCC BAA-946 / MGAS10394).